The following is a 349-amino-acid chain: Sterol-4-alpha-carboxylate 3-dehydrogenase ERG26, decarboxylating (349 aa).

Residues 11 to 17, 62 to 63, and 84 to 86 each bind NADP(+); these read GGSGFLG, DL, and CAS. Residues S124 and Y151 each coordinate substrate. Residues Y151, K155, and 179 to 182 contribute to the NADP(+) site; that span reads PAGI. The active-site Proton donor is K155.

The protein belongs to the 3-beta-HSD family. Heterotetramer of ERG25, ERG26, ERG27 and ERG28. ERG28 acts as a scaffold to tether ERG27 and other 4,4-demethylation-related enzymes, forming a demethylation enzyme complex, in the endoplasmic reticulum.

The protein resides in the endoplasmic reticulum membrane. It catalyses the reaction 4beta-methylzymosterol-4alpha-carboxylate + NADP(+) = 3-dehydro-4-methylzymosterol + CO2 + NADPH. It participates in steroid biosynthesis; zymosterol biosynthesis; zymosterol from lanosterol: step 4/6. Its activity is regulated as follows. Inhibited by FR171456, a natural product with broad antifungal activity. In terms of biological role, sterol-4-alpha-carboxylate 3-dehydrogenase; part of the third module of ergosterol biosynthesis pathway that includes the late steps of the pathway. ERG26 is a catalytic component of the C-4 demethylation complex that catalyzes the oxidative decarboxylation that results in a reduction of the 3-beta-hydroxy group at the C-3 carbon to an oxo group. The third module or late pathway involves the ergosterol synthesis itself through consecutive reactions that mainly occur in the endoplasmic reticulum (ER) membrane. Firstly, the squalene synthase ERG9 catalyzes the condensation of 2 farnesyl pyrophosphate moieties to form squalene, which is the precursor of all steroids. Squalene synthase is crucial for balancing the incorporation of farnesyl diphosphate (FPP) into sterol and nonsterol isoprene synthesis. Secondly, the squalene epoxidase ERG1 catalyzes the stereospecific oxidation of squalene to (S)-2,3-epoxysqualene, which is considered to be a rate-limiting enzyme in steroid biosynthesis. Then, the lanosterol synthase ERG7 catalyzes the cyclization of (S)-2,3 oxidosqualene to lanosterol, a reaction that forms the sterol core. In the next steps, lanosterol is transformed to zymosterol through a complex process involving various demethylation, reduction and desaturation reactions. The lanosterol 14-alpha-demethylase ERG11 (also known as CYP51) catalyzes C14-demethylation of lanosterol to produce 4,4'-dimethyl cholesta-8,14,24-triene-3-beta-ol, which is critical for ergosterol biosynthesis. The C-14 reductase ERG24 reduces the C14=C15 double bond of 4,4-dimethyl-cholesta-8,14,24-trienol to produce 4,4-dimethyl-cholesta-8,24-dienol. 4,4-dimethyl-cholesta-8,24-dienol is substrate of the C-4 demethylation complex ERG25-ERG26-ERG27 in which ERG25 catalyzes the three-step monooxygenation required for the demethylation of 4,4-dimethyl and 4alpha-methylsterols, ERG26 catalyzes the oxidative decarboxylation that results in a reduction of the 3-beta-hydroxy group at the C-3 carbon to an oxo group, and ERG27 is responsible for the reduction of the keto group on the C-3. ERG28 has a role as a scaffold to help anchor ERG25, ERG26 and ERG27 to the endoplasmic reticulum and ERG29 regulates the activity of the iron-containing C4-methylsterol oxidase ERG25. Then, the sterol 24-C-methyltransferase ERG6 catalyzes the methyl transfer from S-adenosyl-methionine to the C-24 of zymosterol to form fecosterol. The C-8 sterol isomerase ERG2 catalyzes the reaction which results in unsaturation at C-7 in the B ring of sterols and thus converts fecosterol to episterol. The sterol-C5-desaturase ERG3 then catalyzes the introduction of a C-5 double bond in the B ring to produce 5-dehydroepisterol. The C-22 sterol desaturase ERG5 further converts 5-dehydroepisterol into ergosta-5,7,22,24(28)-tetraen-3beta-ol by forming the C-22(23) double bond in the sterol side chain. Finally, ergosta-5,7,22,24(28)-tetraen-3beta-ol is substrate of the C-24(28) sterol reductase ERG4 to produce ergosterol. The protein is Sterol-4-alpha-carboxylate 3-dehydrogenase ERG26, decarboxylating of Saccharomyces cerevisiae (strain ATCC 204508 / S288c) (Baker's yeast).